The primary structure comprises 430 residues: GTPase Obg (430 aa).

An Obg domain is found at 1–158 (MFVDQVKINV…IELQLELKVL (158 aa)). A disordered region spans residues 122–143 (GGRGNMRFASPRNPAPEISENG). One can recognise an OBG-type G domain in the interval 159-334 (ADVGLLGFPS…LVARTADVLE (176 aa)). GTP is bound by residues 165 to 172 (GFPSVGKS), 190 to 194 (FTTLV), 212 to 215 (DIPG), 282 to 285 (TKMD), and 315 to 317 (SSI). Mg(2+)-binding residues include Ser172 and Thr192. An OCT domain is found at 353 to 430 (YEFSSEKDFT…ILDFVFEFVE (78 aa)).

Belongs to the TRAFAC class OBG-HflX-like GTPase superfamily. OBG GTPase family. As to quaternary structure, monomer. Mg(2+) serves as cofactor.

Its subcellular location is the cytoplasm. An essential GTPase which binds GTP, GDP and possibly (p)ppGpp with moderate affinity, with high nucleotide exchange rates and a fairly low GTP hydrolysis rate. Plays a role in control of the cell cycle, stress response, ribosome biogenesis and in those bacteria that undergo differentiation, in morphogenesis control. This is GTPase Obg from Pediococcus pentosaceus (strain ATCC 25745 / CCUG 21536 / LMG 10740 / 183-1w).